Consider the following 277-residue polypeptide: Caspase-3 (277 aa).

N-acetylmethionine is present on methionine 1. 2 consecutive propeptides follow at residues 1-9 (MDNNETSVD) and 10-28 (SKSI…KSMD). Position 11 is an N6-acetyllysine (lysine 11). Serine 26 carries the phosphoserine modification. Catalysis depends on residues histidine 121 and cysteine 163. At cysteine 163 the chain carries S-nitrosocysteine; in inhibited form.

This sequence belongs to the peptidase C14A family. As to quaternary structure, heterotetramer that consists of two anti-parallel arranged heterodimers, each one formed by a 17 kDa (p17) and a 12 kDa (p12) subunit. Interacts with BIRC6/bruce. Cleavage by granzyme B, caspase-6, caspase-8 and caspase-10 generates the two active subunits. Additional processing of the propeptides is likely due to the autocatalytic activity of the activated protease. Active heterodimers between the small subunit of caspase-7 protease and the large subunit of caspase-3 also occur and vice versa. In terms of processing, S-nitrosylated on its catalytic site cysteine in unstimulated cell lines and denitrosylated upon activation of the Fas apoptotic pathway, associated with an increase in intracellular caspase activity. Fas therefore activates caspase-3 not only by inducing the cleavage of the caspase zymogen to its active subunits, but also by stimulating the denitrosylation of its active site thiol. Post-translationally, ubiquitinated by BIRC6; this activity is inhibited by DIABLO/SMAC. Expressed in heart, brain, liver, and muscle but not in kidney or testis.

The protein localises to the cytoplasm. It catalyses the reaction Strict requirement for an Asp residue at positions P1 and P4. It has a preferred cleavage sequence of Asp-Xaa-Xaa-Asp-|- with a hydrophobic amino-acid residue at P2 and a hydrophilic amino-acid residue at P3, although Val or Ala are also accepted at this position.. With respect to regulation, inhibited by BIRC6; following inhibition of BIRC6-caspase binding by DIABLO/SMAC, BIRC6 is subjected to caspase cleavage, leading to an increase in active caspases. In terms of biological role, involved in the activation cascade of caspases responsible for apoptosis execution. At the onset of apoptosis, it proteolytically cleaves poly(ADP-ribose) polymerase PARP1 at a '216-Asp-|-Gly-217' bond. Cleaves and activates sterol regulatory element binding proteins (SREBPs) between the basic helix-loop-helix leucine zipper domain and the membrane attachment domain. Cleaves and activates caspase-6, -7 and -9 (CASP6, CASP7 and CASP9, respectively). Cleaves and inactivates interleukin-18 (IL18). Triggers cell adhesion in sympathetic neurons through RET cleavage. Cleaves IL-1 beta between an Asp and an Ala, releasing the mature cytokine which is involved in a variety of inflammatory processes. Cleaves and inhibits serine/threonine-protein kinase AKT1 in response to oxidative stress. Acts as an inhibitor of type I interferon production during virus-induced apoptosis by mediating cleavage of antiviral proteins CGAS, IRF3 and MAVS, thereby preventing cytokine overproduction. Also involved in pyroptosis by mediating cleavage and activation of gasdermin-E (GSDME). Cleaves XRCC4 and phospholipid scramblase proteins XKR4, XKR8 and XKR9, leading to promote phosphatidylserine exposure on apoptotic cell surface. Cleaves BIRC6 following inhibition of BIRC6-caspase binding by DIABLO/SMAC. This Rattus norvegicus (Rat) protein is Caspase-3 (Casp3).